The following is a 101-amino-acid chain: Small ribosomal subunit protein uS10 (101 aa).

This sequence belongs to the universal ribosomal protein uS10 family. Part of the 30S ribosomal subunit.

Functionally, involved in the binding of tRNA to the ribosomes. This Bacteroides fragilis (strain ATCC 25285 / DSM 2151 / CCUG 4856 / JCM 11019 / LMG 10263 / NCTC 9343 / Onslow / VPI 2553 / EN-2) protein is Small ribosomal subunit protein uS10.